We begin with the raw amino-acid sequence, 189 residues long: Elongation factor P (189 aa).

It belongs to the elongation factor P family.

Its subcellular location is the cytoplasm. It participates in protein biosynthesis; polypeptide chain elongation. Its function is as follows. Involved in peptide bond synthesis. Stimulates efficient translation and peptide-bond synthesis on native or reconstituted 70S ribosomes in vitro. Probably functions indirectly by altering the affinity of the ribosome for aminoacyl-tRNA, thus increasing their reactivity as acceptors for peptidyl transferase. This chain is Elongation factor P, found in Ehrlichia chaffeensis (strain ATCC CRL-10679 / Arkansas).